We begin with the raw amino-acid sequence, 126 residues long: Large ribosomal subunit protein bL20 (126 aa).

Belongs to the bacterial ribosomal protein bL20 family.

Functionally, binds directly to 23S ribosomal RNA and is necessary for the in vitro assembly process of the 50S ribosomal subunit. It is not involved in the protein synthesizing functions of that subunit. In Parafrankia sp. (strain EAN1pec), this protein is Large ribosomal subunit protein bL20.